A 275-amino-acid chain; its full sequence is Formamidopyrimidine-DNA glycosylase (275 aa).

Proline 2 serves as the catalytic Schiff-base intermediate with DNA. Residue glutamate 3 is the Proton donor of the active site. The active-site Proton donor; for beta-elimination activity is lysine 58. 2 residues coordinate DNA: histidine 91 and arginine 110. An FPG-type zinc finger spans residues 238–272 (QVYGQTGKPCPRCGQAIVKLKVGGRGTHICPKCQK). Residue arginine 262 is the Proton donor; for delta-elimination activity of the active site.

Belongs to the FPG family. In terms of assembly, monomer. It depends on Zn(2+) as a cofactor.

It catalyses the reaction Hydrolysis of DNA containing ring-opened 7-methylguanine residues, releasing 2,6-diamino-4-hydroxy-5-(N-methyl)formamidopyrimidine.. The catalysed reaction is 2'-deoxyribonucleotide-(2'-deoxyribose 5'-phosphate)-2'-deoxyribonucleotide-DNA = a 3'-end 2'-deoxyribonucleotide-(2,3-dehydro-2,3-deoxyribose 5'-phosphate)-DNA + a 5'-end 5'-phospho-2'-deoxyribonucleoside-DNA + H(+). In terms of biological role, involved in base excision repair of DNA damaged by oxidation or by mutagenic agents. Acts as a DNA glycosylase that recognizes and removes damaged bases. Has a preference for oxidized purines, such as 7,8-dihydro-8-oxoguanine (8-oxoG). Has AP (apurinic/apyrimidinic) lyase activity and introduces nicks in the DNA strand. Cleaves the DNA backbone by beta-delta elimination to generate a single-strand break at the site of the removed base with both 3'- and 5'-phosphates. This chain is Formamidopyrimidine-DNA glycosylase, found in Streptococcus pyogenes serotype M6 (strain ATCC BAA-946 / MGAS10394).